Reading from the N-terminus, the 152-residue chain is D-aminoacyl-tRNA deacylase (152 aa).

The short motif at 142-143 (GP) is the Gly-cisPro motif, important for rejection of L-amino acids element.

This sequence belongs to the DTD family. In terms of assembly, homodimer.

Its subcellular location is the cytoplasm. The enzyme catalyses glycyl-tRNA(Ala) + H2O = tRNA(Ala) + glycine + H(+). It carries out the reaction a D-aminoacyl-tRNA + H2O = a tRNA + a D-alpha-amino acid + H(+). Functionally, an aminoacyl-tRNA editing enzyme that deacylates mischarged D-aminoacyl-tRNAs. Also deacylates mischarged glycyl-tRNA(Ala), protecting cells against glycine mischarging by AlaRS. Acts via tRNA-based rather than protein-based catalysis; rejects L-amino acids rather than detecting D-amino acids in the active site. By recycling D-aminoacyl-tRNA to D-amino acids and free tRNA molecules, this enzyme counteracts the toxicity associated with the formation of D-aminoacyl-tRNA entities in vivo and helps enforce protein L-homochirality. This chain is D-aminoacyl-tRNA deacylase, found in Burkholderia vietnamiensis (strain G4 / LMG 22486) (Burkholderia cepacia (strain R1808)).